The chain runs to 241 residues: UDP-2,3-diacylglucosamine hydrolase (241 aa).

Aspartate 8, histidine 10, aspartate 41, asparagine 79, and histidine 114 together coordinate Mn(2+). 79–80 (NR) serves as a coordination point for substrate. Residues aspartate 122, serine 160, asparagine 164, lysine 167, and histidine 195 each contribute to the substrate site. Mn(2+) contacts are provided by histidine 195 and histidine 197.

It belongs to the LpxH family. The cofactor is Mn(2+).

It localises to the cell inner membrane. It catalyses the reaction UDP-2-N,3-O-bis[(3R)-3-hydroxytetradecanoyl]-alpha-D-glucosamine + H2O = 2-N,3-O-bis[(3R)-3-hydroxytetradecanoyl]-alpha-D-glucosaminyl 1-phosphate + UMP + 2 H(+). The protein operates within glycolipid biosynthesis; lipid IV(A) biosynthesis; lipid IV(A) from (3R)-3-hydroxytetradecanoyl-[acyl-carrier-protein] and UDP-N-acetyl-alpha-D-glucosamine: step 4/6. Functionally, hydrolyzes the pyrophosphate bond of UDP-2,3-diacylglucosamine to yield 2,3-diacylglucosamine 1-phosphate (lipid X) and UMP by catalyzing the attack of water at the alpha-P atom. Involved in the biosynthesis of lipid A, a phosphorylated glycolipid that anchors the lipopolysaccharide to the outer membrane of the cell. This Aeromonas hydrophila subsp. hydrophila (strain ATCC 7966 / DSM 30187 / BCRC 13018 / CCUG 14551 / JCM 1027 / KCTC 2358 / NCIMB 9240 / NCTC 8049) protein is UDP-2,3-diacylglucosamine hydrolase.